Reading from the N-terminus, the 222-residue chain is Beta-casein (222 aa).

The signal sequence occupies residues 1-15 (MKVLILACLVALALA). Position 27 is a phosphothreonine (Thr-27). Residues Ser-30, Ser-32, Ser-33, and Ser-34 each carry the phosphoserine modification.

It belongs to the beta-casein family. In terms of tissue distribution, mammary gland specific. Secreted in milk.

It is found in the secreted. Important role in determination of the surface properties of the casein micelles. The polypeptide is Beta-casein (CSN2) (Ovis aries (Sheep)).